We begin with the raw amino-acid sequence, 133 residues long: 14 kDa fatty acid-binding protein (133 aa).

Residues arginine 107 and arginine 127 to tyrosine 129 contribute to the (5Z,8Z,11Z,14Z)-eicosatetraenoate site. Residues arginine 107 and arginine 127–tyrosine 129 contribute to the (9Z)-octadecenoate site.

Belongs to the calycin superfamily. Fatty-acid binding protein (FABP) family. Tubercles, muscle layers and body.

The protein localises to the cytoplasm. May play a role in the transport of fatty acids. Binds various fatty acids, such as arachidonic, oleic, palmitic and linolenic acid (in vitro). This is 14 kDa fatty acid-binding protein from Schistosoma mansoni (Blood fluke).